We begin with the raw amino-acid sequence, 944 residues long: E3 ubiquitin-protein ligase JMJ24 (944 aa).

Disordered regions lie at residues 20 to 40 (QTRS…GIPD) and 77 to 103 (ANSA…YSEG). Residues 38 to 83 (IPDDLRCKRSDGKQWRCTAMSMADKTVCEKHYIQAKKRAANSAFRA) form the WRC domain. The short motif at 73–80 (KKRAANSA) is the Nuclear localization signal 1 element. The PHD-type; atypical zinc-finger motif lies at 217–269 (GEICHQCQRKDRERIISCLKCNQRAFCHNCLSARYSEISLEEVEKVCPACRGL). 8 residues coordinate Zn(2+): Cys220, Cys223, Cys234, Cys237, Cys243, Cys246, Cys263, and Cys266. Positions 323–330 (EKRLREVE) match the Nuclear localization signal 2 motif. The region spanning 621–873 (PRLGLLNVAA…ESARLAEEIR (253 aa)) is the JmjC domain. Over residues 685-703 (ERVRKTKPVPEEPDQKMSE) the composition is skewed to basic and acidic residues. The interval 685–715 (ERVRKTKPVPEEPDQKMSENESLLSPEQKLR) is disordered.

The protein belongs to the JARID1 histone demethylase family. As to quaternary structure, homodimer. Interacts with RDR2. Binds to CMT3. Associates with the E2 ubiquitin-conjugating enzyme UBC10. Post-translationally, self-ubiquitinates. As to expression, expressed in inflorescences, flowers, roots, siliques, leaves and stems, especially in the vasculature (mainly phloem), with highest levels in floral organs.

The protein localises to the nucleus. The enzyme catalyses S-ubiquitinyl-[E2 ubiquitin-conjugating enzyme]-L-cysteine + [acceptor protein]-L-lysine = [E2 ubiquitin-conjugating enzyme]-L-cysteine + N(6)-ubiquitinyl-[acceptor protein]-L-lysine.. Binds histone H3 but seems to have lost demethylase activity probably due to its inability to bind iron Fe(2+). Possesses E3 ubiquitin ligase activity and targets directly CMT3 for proteasomal degradation to initiate destabilization of the heterochromatic state (e.g. CHG cytosine methylation and H3K9me2) of endogenous silenced loci. Required for the removal of repressive H3K9me2 histone marks to facilitate the transcription of AtSN1, AtMu1c, solo LTR and SDC, thus counteracting their transcriptional silencing. Mainly required to promote the basal level transcription of silenced loci such as TE and repeats targeted by RNA-dependent DNA methylation (RdDM) for silencing, a specialized branch of the RNA interference (RNAi) pathway. Also cooperates with RNAi pathways for gene silencing both by contributing to the production of 24-nt siRNA to initiate RdDM and by recruiting RDR2 to enable local transcripts to make dsRNA. Antagonizes histone H3K9 demethylase IBM1/JMJ25 function. This is E3 ubiquitin-protein ligase JMJ24 from Arabidopsis thaliana (Mouse-ear cress).